A 205-amino-acid chain; its full sequence is Probable GTP-binding protein EngB (205 aa).

The 175-residue stretch at 27-201 (EGMEIAFAGR…AAKLDSWFSS (175 aa)) folds into the EngB-type G domain. GTP is bound by residues 35–42 (GRSNAGKS), 62–66 (GRTQL), 80–83 (DLPG), 147–150 (TKAD), and 180–182 (FSA). Residues S42 and T64 each coordinate Mg(2+).

It belongs to the TRAFAC class TrmE-Era-EngA-EngB-Septin-like GTPase superfamily. EngB GTPase family. Requires Mg(2+) as cofactor.

Necessary for normal cell division and for the maintenance of normal septation. The polypeptide is Probable GTP-binding protein EngB (Mannheimia succiniciproducens (strain KCTC 0769BP / MBEL55E)).